Reading from the N-terminus, the 150-residue chain is Large ribosomal subunit protein uL15 (150 aa).

Residues 1–52 form a disordered region; that stretch reads MITLNTLKDSTRKRKPRKRVGRGIGSKHGKTCGRGEKGAGARSGYKRRLGKE. The span at 11-31 shows a compositional bias: basic residues; it reads TRKRKPRKRVGRGIGSKHGKT.

It belongs to the universal ribosomal protein uL15 family. Part of the 50S ribosomal subunit.

Its function is as follows. Binds to the 23S rRNA. The sequence is that of Large ribosomal subunit protein uL15 from Protochlamydia amoebophila (strain UWE25).